The following is a 338-amino-acid chain: Ornithine carbamoyltransferase (338 aa).

Residues 56-59 (STRT), Arg107, and 134-137 (HPTQ) each bind carbamoyl phosphate. Residues Asn168, Asp232, and 236-237 (SM) each bind L-ornithine. Carbamoyl phosphate contacts are provided by residues 274–275 (CL) and Arg320.

The protein belongs to the aspartate/ornithine carbamoyltransferase superfamily. OTCase family.

Its subcellular location is the cytoplasm. It carries out the reaction carbamoyl phosphate + L-ornithine = L-citrulline + phosphate + H(+). It functions in the pathway amino-acid biosynthesis; L-arginine biosynthesis; L-arginine from L-ornithine and carbamoyl phosphate: step 1/3. Its function is as follows. Reversibly catalyzes the transfer of the carbamoyl group from carbamoyl phosphate (CP) to the N(epsilon) atom of ornithine (ORN) to produce L-citrulline. The chain is Ornithine carbamoyltransferase (argI) from Buchnera aphidicola subsp. Acyrthosiphon pisum (strain APS) (Acyrthosiphon pisum symbiotic bacterium).